The sequence spans 337 residues: tRNA N6-adenosine threonylcarbamoyltransferase (337 aa).

Fe cation-binding residues include H111 and H115. Residues 134–138 (LVSGG), D167, G180, and N272 each bind substrate. D300 contributes to the Fe cation binding site.

The protein belongs to the KAE1 / TsaD family. It depends on Fe(2+) as a cofactor.

It localises to the cytoplasm. It carries out the reaction L-threonylcarbamoyladenylate + adenosine(37) in tRNA = N(6)-L-threonylcarbamoyladenosine(37) in tRNA + AMP + H(+). Functionally, required for the formation of a threonylcarbamoyl group on adenosine at position 37 (t(6)A37) in tRNAs that read codons beginning with adenine. Is involved in the transfer of the threonylcarbamoyl moiety of threonylcarbamoyl-AMP (TC-AMP) to the N6 group of A37, together with TsaE and TsaB. TsaD likely plays a direct catalytic role in this reaction. This is tRNA N6-adenosine threonylcarbamoyltransferase from Pseudoalteromonas translucida (strain TAC 125).